Reading from the N-terminus, the 144-residue chain is Deoxyuridine 5'-triphosphate nucleotidohydrolase (144 aa).

Substrate contacts are provided by residues 63–65 (RSG), Asn76, and 80–82 (TID).

Belongs to the dUTPase family. Requires Mg(2+) as cofactor.

It carries out the reaction dUTP + H2O = dUMP + diphosphate + H(+). It participates in pyrimidine metabolism; dUMP biosynthesis; dUMP from dCTP (dUTP route): step 2/2. In terms of biological role, this enzyme is involved in nucleotide metabolism: it produces dUMP, the immediate precursor of thymidine nucleotides and it decreases the intracellular concentration of dUTP so that uracil cannot be incorporated into DNA. The sequence is that of Deoxyuridine 5'-triphosphate nucleotidohydrolase from Phocaeicola vulgatus (strain ATCC 8482 / DSM 1447 / JCM 5826 / CCUG 4940 / NBRC 14291 / NCTC 11154) (Bacteroides vulgatus).